The primary structure comprises 206 residues: Small ribosomal subunit protein uS4c (206 aa).

2 stretches are compositionally biased toward basic residues: residues 1 to 13 (MSRY…RITR) and 25 to 34 (QSKKKGRPGQ). Residues 1–50 (MSRYRGPKLRITRRLGALPGLTQKQSKKKGRPGQHGKSNEADNSKKTTEY) are disordered. Basic and acidic residues predominate over residues 37 to 50 (KSNEADNSKKTTEY). Positions 95–157 (MRLDTICFTL…ATSKNLVEGN (63 aa)) constitute an S4 RNA-binding domain.

This sequence belongs to the universal ribosomal protein uS4 family. In terms of assembly, part of the 30S ribosomal subunit. Contacts protein S5. The interaction surface between S4 and S5 is involved in control of translational fidelity.

The protein localises to the plastid. Its subcellular location is the chloroplast. One of the primary rRNA binding proteins, it binds directly to 16S rRNA where it nucleates assembly of the body of the 30S subunit. In terms of biological role, with S5 and S12 plays an important role in translational accuracy. The protein is Small ribosomal subunit protein uS4c (rps4) of Trieres chinensis (Marine centric diatom).